The primary structure comprises 780 residues: Protein AMEIOTIC 1 (780 aa).

Disordered regions lie at residues 32–60 and 237–327; these read KKKTSSSHSRNGKDDVNHDSTIQPRSPLS and APKE…RWSA. A compositionally biased stretch (polar residues) spans 50 to 60; the sequence is DSTIQPRSPLS. 2 stretches are compositionally biased toward basic and acidic residues: residues 263 to 291 and 309 to 327; these read EVKRSERNCKRKREAEASSKDNNGDEGKK and RTVESKDGDPRHGKDRWSA. Residues 448–547 adopt a coiled-coil conformation; it reads VEELTEEVNG…LEEQVTYLSS (100 aa).

The protein resides in the nucleus. The protein localises to the chromosome. Functionally, plays a fundamental role in building the proper chromosome structure at the beginning of meiosis in male meiocytes. Required for the transition from leptotene to zygotene in meiocytes. Required for homologous chromosome pairing, and initiation and progression of meiotic recombination. Regulates meiocyte cytoskeleton organization. This Zea mays (Maize) protein is Protein AMEIOTIC 1.